The chain runs to 300 residues: L-arabinolactonase (300 aa).

Residues E22, N156, and D205 each coordinate a divalent metal cation.

Belongs to the SMP-30/CGR1 family. It depends on a divalent metal cation as a cofactor.

The catalysed reaction is L-arabinono-1,4-lactone + H2O = L-arabinonate + H(+). Catalyzes the cleavage of L-arabino-gamma-lactone to L-arabonate. Is involved in a degradation pathway of L-arabinose that allows A.brasilense to grow on L-arabinose as a sole carbon source. Can also use D-galactono-1,4-lactone as substrate in vitro; however, the enzyme is probably not involved in the metabolism of D-galactose in vivo. This is L-arabinolactonase (araB) from Azospirillum brasilense.